Here is a 268-residue protein sequence, read N- to C-terminus: Small ribosomal subunit protein uS2 (268 aa).

The interval 228–268 (QLDSEQDYEDFDESISDEYDDYEDEEEYEEQDLEVDASEDE) is disordered. The span at 231–268 (SEQDYEDFDESISDEYDDYEDEEEYEEQDLEVDASEDE) shows a compositional bias: acidic residues.

This sequence belongs to the universal ribosomal protein uS2 family.

The sequence is that of Small ribosomal subunit protein uS2 from Rippkaea orientalis (strain PCC 8801 / RF-1) (Cyanothece sp. (strain PCC 8801)).